A 421-amino-acid chain; its full sequence is Probable acid phosphatase (421 aa).

Catalysis depends on Asp-229, which acts as the Proton donor.

It catalyses the reaction a phosphate monoester + H2O = an alcohol + phosphate. This chain is Probable acid phosphatase, found in Kluyveromyces lactis (strain ATCC 8585 / CBS 2359 / DSM 70799 / NBRC 1267 / NRRL Y-1140 / WM37) (Yeast).